The primary structure comprises 433 residues: Urokinase-type plasminogen activator (433 aa).

The first 20 residues, 1 to 20, serve as a signal peptide directing secretion; sequence MRVLLACLLVCALVVSDSDG. The EGF-like domain occupies 29–65; sequence GESNCGCLNGGKCVTYKYFSNIQRCSCPKKFQGEHCE. 6 disulfide bridges follow: C33–C41, C35–C53, C55–C64, C72–C153, C93–C135, and C124–C148. The binds urokinase plasminogen activator surface receptor stretch occupies residues 36-59; sequence LNGGKCVTYKYFSNIQRCSCPKKF. Residues 72–153 form the Kringle domain; the sequence is CYQGNGHSYR…FVQFCMVQDC (82 aa). The interval 154-180 is connecting peptide; that stretch reads SVGKSPSSPREKEEFQCGQKALRPRFK. A Phosphoserine modification is found at S160. 6 cysteine pairs are disulfide-bonded: C170-C301, C211-C227, C219-C290, C315-C384, C347-C363, and C374-C402. A Peptidase S1 domain is found at 181 to 426; that stretch reads IVGGQVTNAE…FLPWINTHTR (246 aa). Residues H226 and D277 each act as charge relay system in the active site. Catalysis depends on S378, which acts as the Charge relay system.

The protein belongs to the peptidase S1 family. As to quaternary structure, found in high and low molecular mass forms. Each consists of two chains, A and B. The high molecular mass form contains a long chain A which is cleaved to yield a short chain A. Forms heterodimer with SERPINA5. Binds LRP1B; binding is followed by internalization and degradation. Interacts with MRC2. Interacts with PLAUR. In complex with SERPINE1, interacts with PLAUR/uPAR. Interacts with SORL1 and LRP1, either alone or in complex with SERPINE1; these interactions are abolished in the presence of LRPAP1/RAP. The ternary complex composed of PLAUR-PLAU-PAI1 also interacts with SORLA. Post-translationally, produced as an inactive single-chain protein (pro-uPA or sc-uPA), is processed into the active disulfide-linked two-chain form of PLAU/uPA by a proteolytic event mediated, at least, by TMPRSS4.

It localises to the secreted. It carries out the reaction Specific cleavage of Arg-|-Val bond in plasminogen to form plasmin.. Its activity is regulated as follows. Inhibited by SERPINA5. Inhibited by SERPINE1. Its function is as follows. Specifically cleaves the zymogen plasminogen to form the active enzyme plasmin. The polypeptide is Urokinase-type plasminogen activator (PLAU) (Bos taurus (Bovine)).